The primary structure comprises 281 residues: 18S rRNA (guanine-N(7))-methyltransferase (281 aa).

Positions 212-231 are enriched in polar residues; sequence LPKGLTESQDADQASESMFT. Residues 212–281 form a disordered region; it reads LPKGLTESQD…YTGRKRKPRF (70 aa). Residues 242–256 are compositionally biased toward basic and acidic residues; the sequence is RDLVKKSREWVLEKK.

The protein belongs to the class I-like SAM-binding methyltransferase superfamily. BUD23/WBSCR22 family. Heterodimer with TRMT112; this heterodimerization is necessary for the metabolic stability and activity of the catalytic subunit BUD23. Interacts with GRIP1. In terms of processing, may be ubiquitinated and targeted to degradation in response to pro-inflammatory cytokine signaling.

It is found in the nucleus. Its subcellular location is the nucleoplasm. The protein localises to the cytoplasm. The protein resides in the perinuclear region. The catalysed reaction is a guanosine in 18S rRNA + S-adenosyl-L-methionine = an N(7)-methylguanosine in 18S rRNA + S-adenosyl-L-homocysteine. Functionally, S-adenosyl-L-methionine-dependent methyltransferase that specifically methylates the N(7) position of a guanine in 18S rRNA. Requires the methyltransferase adapter protein TRM112 for full rRNA methyltransferase activity. Involved in the pre-rRNA processing steps leading to small-subunit rRNA production independently of its RNA-modifying catalytic activity. Important for biogenesis end export of the 40S ribosomal subunit independent on its methyltransferase activity. Locus-specific steroid receptor coactivator. Potentiates transactivation by glucocorticoid (NR3C1), mineralocorticoid (NR3C2), androgen (AR) and progesterone (PGR) receptors. Required for the maintenance of open chromatin at the TSC22D3/GILZ locus to facilitate NR3C1 loading on the response elements. Required for maintenance of dimethylation on histone H3 'Lys-79' (H3K79me2), although direct histone methyltransferase activity is not observed in vitro. In Mus musculus (Mouse), this protein is 18S rRNA (guanine-N(7))-methyltransferase.